Here is a 314-residue protein sequence, read N- to C-terminus: DNA-directed RNA polymerase subunit alpha (314 aa).

The interval 1 to 227 (MTYFQIECVE…SLFYPLTNLN (227 aa)) is alpha N-terminal domain (alpha-NTD). The interval 239-314 (EEEINQVLIE…LPKEKNIQNT (76 aa)) is alpha C-terminal domain (alpha-CTD).

Belongs to the RNA polymerase alpha chain family. As to quaternary structure, in plastids the minimal PEP RNA polymerase catalytic core is composed of four subunits: alpha, beta, beta', and beta''. When a (nuclear-encoded) sigma factor is associated with the core the holoenzyme is formed, which can initiate transcription.

It localises to the plastid. The protein resides in the chloroplast. The catalysed reaction is RNA(n) + a ribonucleoside 5'-triphosphate = RNA(n+1) + diphosphate. DNA-dependent RNA polymerase catalyzes the transcription of DNA into RNA using the four ribonucleoside triphosphates as substrates. The protein is DNA-directed RNA polymerase subunit alpha of Gracilaria tenuistipitata var. liui (Red alga).